Consider the following 473-residue polypeptide: ATP synthase subunit beta (473 aa).

158–165 (GGAGVGKT) contributes to the ATP binding site.

Belongs to the ATPase alpha/beta chains family. In terms of assembly, F-type ATPases have 2 components, CF(1) - the catalytic core - and CF(0) - the membrane proton channel. CF(1) has five subunits: alpha(3), beta(3), gamma(1), delta(1), epsilon(1). CF(0) has three main subunits: a(1), b(2) and c(9-12). The alpha and beta chains form an alternating ring which encloses part of the gamma chain. CF(1) is attached to CF(0) by a central stalk formed by the gamma and epsilon chains, while a peripheral stalk is formed by the delta and b chains.

It is found in the cell membrane. The enzyme catalyses ATP + H2O + 4 H(+)(in) = ADP + phosphate + 5 H(+)(out). In terms of biological role, produces ATP from ADP in the presence of a proton gradient across the membrane. The catalytic sites are hosted primarily by the beta subunits. The polypeptide is ATP synthase subunit beta (Geobacillus kaustophilus (strain HTA426)).